The following is an 883-amino-acid chain: DNA double-strand break repair Rad50 ATPase (883 aa).

Residues Lys12, 32 to 38, and Gln137 contribute to the ATP site; that span reads NGSGKSS. Residues 244–283 are a coiled coil; it reads ERYEESRTALADVEETIADVREAVAEAERERETLADRVSD. Disordered regions lie at residues 271 to 290 and 305 to 326; these read ERER…RASD and DDPD…REAV. Basic and acidic residues predominate over residues 313-326; it reads SAERDAVADQREAV. 2 coiled-coil regions span residues 336-389 and 414-452; these read AVSR…IEAL and LDDA…LDEG. One can recognise a Zinc-hook domain in the interval 407 to 506; that stretch reads FGAAEAFLDD…RVDRGESLVA (100 aa). Zn(2+) is bound by residues Cys454 and Cys457. Residues 508–565 form a disordered region; that stretch reads EDRVDDLEQQRERAVERRDEQADIADAKRDQAAEKRDRAADLDAEAEDARADAAAKRD. Coiled-coil stretches lie at residues 571-604 and 668-720; these read RETL…AADA and KLQA…VTAL.

The protein belongs to the SMC family. RAD50 subfamily. In terms of assembly, homodimer. Forms a heterotetramer composed of two Mre11 subunits and two Rad50 subunits. Requires Zn(2+) as cofactor.

Functionally, part of the Rad50/Mre11 complex, which is involved in the early steps of DNA double-strand break (DSB) repair. Rad50 controls the balance between DNA end bridging and DNA resection via ATP-dependent structural rearrangements of the Rad50/Mre11 complex. The polypeptide is DNA double-strand break repair Rad50 ATPase (Halobacterium salinarum (strain ATCC 700922 / JCM 11081 / NRC-1) (Halobacterium halobium)).